A 295-amino-acid chain; its full sequence is Ribosomal protein L11 methyltransferase (295 aa).

Residues Thr145, Gly166, Asp188, and Asn230 each contribute to the S-adenosyl-L-methionine site.

The protein belongs to the methyltransferase superfamily. PrmA family.

Its subcellular location is the cytoplasm. The catalysed reaction is L-lysyl-[protein] + 3 S-adenosyl-L-methionine = N(6),N(6),N(6)-trimethyl-L-lysyl-[protein] + 3 S-adenosyl-L-homocysteine + 3 H(+). Its function is as follows. Methylates ribosomal protein L11. This is Ribosomal protein L11 methyltransferase from Pectobacterium atrosepticum (strain SCRI 1043 / ATCC BAA-672) (Erwinia carotovora subsp. atroseptica).